The sequence spans 922 residues: Two-component sensor PprA (922 aa).

Low complexity predominate over residues Met-1–Ala-10. The segment at Met-1 to Gly-22 is disordered. The 53-residue stretch at Val-506 to Glu-558 folds into the PAC 1 domain. One can recognise a PAS domain in the interval Ser-559–Leu-622. In terms of domain architecture, PAC 2 spans Glu-632–Gln-684. The region spanning Gly-697–Ala-916 is the Histidine kinase domain. His-700 carries the phosphohistidine; by autocatalysis modification.

Autophosphorylated.

The enzyme catalyses ATP + protein L-histidine = ADP + protein N-phospho-L-histidine.. Member of the two-component regulatory system PprA/PprB involved in biofilm formation by controlling the expression of many related genes including type IVb pili major subunit flp pilin, adhesin bapA or cupE fimbriae. Functions as a heme sensor histidine kinase which is autophosphorylated at a histidine residue and transfers its phosphate group to PprB. The sequence is that of Two-component sensor PprA from Pseudomonas aeruginosa (strain ATCC 15692 / DSM 22644 / CIP 104116 / JCM 14847 / LMG 12228 / 1C / PRS 101 / PAO1).